The primary structure comprises 98 residues: NADH-ubiquinone oxidoreductase chain 4L (98 aa).

3 helical membrane passes run 1–21 (MSMV…GLLI), 30–50 (LLCL…TILI), and 61–81 (IILL…LVMI).

This sequence belongs to the complex I subunit 4L family. In terms of assembly, core subunit of respiratory chain NADH dehydrogenase (Complex I) which is composed of 45 different subunits.

The protein resides in the mitochondrion inner membrane. It catalyses the reaction a ubiquinone + NADH + 5 H(+)(in) = a ubiquinol + NAD(+) + 4 H(+)(out). Its function is as follows. Core subunit of the mitochondrial membrane respiratory chain NADH dehydrogenase (Complex I) which catalyzes electron transfer from NADH through the respiratory chain, using ubiquinone as an electron acceptor. Part of the enzyme membrane arm which is embedded in the lipid bilayer and involved in proton translocation. The chain is NADH-ubiquinone oxidoreductase chain 4L (MT-ND4L) from Neovison vison (American mink).